Consider the following 272-residue polypeptide: MMNPFLPEGCDPPPPPQPMEGLHENAPPPFLTKTFEMVDDPNTDHIVSWNRGGTSFVVWDLHSFSTILLPRHFKHSNFSSFIRQLNTYGFRKIEAERWEFANEEFLLGQRQLLKNIKRRNPFTPSSSPSHDACNELRREKQVLMMEIVSLRQQQQTTKSYIKAMEQRIEGTERKQRQMMSFLARAMQSPSFLHQLLKQRDKKIKELEDNESAKRKRGSSSMSELEVLALEMQGHGKQRNMLEEEDHQLVVERELDDGFWEELLSDESLASTS.

The disordered stretch occupies residues 1–26 (MMNPFLPEGCDPPPPPQPMEGLHENA). A DNA-binding region spans residues 27–121 (PPPFLTKTFE…LLKNIKRRNP (95 aa)). Residues 132-186 (ACNELRREKQVLMMEIVSLRQQQQTTKSYIKAMEQRIEGTERKQRQMMSFLARAM) are hydrophobic repeat HR-A/B. Residues 201 to 216 (KKIKELEDNESAKRKR) carry the Bipartite nuclear localization signal motif. Basic and acidic residues predominate over residues 203 to 212 (IKELEDNESA). The tract at residues 203–223 (IKELEDNESAKRKRGSSSMSE) is disordered. The AHA motif lies at 256–265 (DGFWEELLSD).

This sequence belongs to the HSF family. Class A subfamily. As to quaternary structure, homotrimer. Exhibits temperature-dependent phosphorylation.

The protein localises to the nucleus. Functionally, transcriptional activator that specifically binds DNA sequence 5'-AGAAnnTTCT-3' known as heat shock promoter elements (HSE). This is Heat stress transcription factor A-7a (HSFA7A) from Arabidopsis thaliana (Mouse-ear cress).